The chain runs to 233 residues: Phosphatidylserine decarboxylase proenzyme (233 aa).

Serine 190 acts as the Schiff-base intermediate with substrate; via pyruvic acid in catalysis. Pyruvic acid (Ser); by autocatalysis is present on serine 190.

The protein belongs to the phosphatidylserine decarboxylase family. PSD-A subfamily. As to quaternary structure, heterodimer of a large membrane-associated beta subunit and a small pyruvoyl-containing alpha subunit. It depends on pyruvate as a cofactor. Is synthesized initially as an inactive proenzyme. Formation of the active enzyme involves a self-maturation process in which the active site pyruvoyl group is generated from an internal serine residue via an autocatalytic post-translational modification. Two non-identical subunits are generated from the proenzyme in this reaction, and the pyruvate is formed at the N-terminus of the alpha chain, which is derived from the carboxyl end of the proenzyme. The post-translation cleavage follows an unusual pathway, termed non-hydrolytic serinolysis, in which the side chain hydroxyl group of the serine supplies its oxygen atom to form the C-terminus of the beta chain, while the remainder of the serine residue undergoes an oxidative deamination to produce ammonia and the pyruvoyl prosthetic group on the alpha chain.

It is found in the cell membrane. It catalyses the reaction a 1,2-diacyl-sn-glycero-3-phospho-L-serine + H(+) = a 1,2-diacyl-sn-glycero-3-phosphoethanolamine + CO2. It participates in phospholipid metabolism; phosphatidylethanolamine biosynthesis; phosphatidylethanolamine from CDP-diacylglycerol: step 2/2. Catalyzes the formation of phosphatidylethanolamine (PtdEtn) from phosphatidylserine (PtdSer). The polypeptide is Phosphatidylserine decarboxylase proenzyme (Xanthobacter autotrophicus (strain ATCC BAA-1158 / Py2)).